The following is a 681-amino-acid chain: Proton channel OTOP3 (681 aa).

Over residues 1 to 25 (MLSKEEPACRQFHSREKTWGNEHNG) the composition is skewed to basic and acidic residues. Residues 1–26 (MLSKEEPACRQFHSREKTWGNEHNGK) form a disordered region. Residues 1–112 (MLSKEEPACR…LHQRAKKTGR (112 aa)) are Cytoplasmic-facing. Residues 113–133 (LFSGLFGLNLMFLGGTVVSSV) form a helical membrane-spanning segment. The Extracellular segment spans residues 134–143 (ALSNKAVPER). The helical transmembrane segment at 144–166 (DSQSFLCILMLLSSVWALYHLLF) threads the bilayer. Residues 167 to 182 (IRNQNGAVHHDHHAGA) are Cytoplasmic-facing. The helical transmembrane segment at 183 to 204 (MWLKASLAIFGVCSIILSIFEI) threads the bilayer. At 205–216 (GHALLLQNCEIL) the chain is on the extracellular side. The helical transmembrane segment at 217–240 (MDIVFFSIEIVFVSVQTVLLWVSC) threads the bilayer. Residues 241-248 (KDCVQMHH) lie on the Cytoplasmic side of the membrane. A helical transmembrane segment spans residues 249-271 (SVTRYGIMLTLATDILLWLTAVI). Over 272–317 (DDSLEQDLEILQSNSTQDESNEMAQCQCPTDSMCWGLKQGYVTMFP) the chain is Extracellular. The chain crosses the membrane as a helical span at residues 318–334 (FNIEYSLICATLLFIMW). At 335–358 (KNVGRREKLHSDPPRHTFQLRGII) the chain is on the cytoplasmic side. A helical membrane pass occupies residues 359-378 (YGPLIGGAALLVGISVFVQY). Residues 379 to 392 (QVEATSGMVSILSY) lie on the Extracellular side of the membrane. Residues 393–415 (HMYYGYKMIILAPMIVCSVAGII) traverse the membrane as a helical segment. At 416–507 (AHSLREKEKK…QGKMKNYTRK (92 aa)) the chain is on the cytoplasmic side. Residues 508-529 (LDVTLLFVSAVGQLGISYFSII) form a helical membrane-spanning segment. The Extracellular portion of the chain corresponds to 530 to 540 (ATVVTTPWTML). The chain crosses the membrane as a helical span at residues 541–563 (SALNFSNSLLLILQYLSQTMFII). The Cytoplasmic segment spans residues 564–614 (ESMRSIHEEEKEKPGHHEESHRRMSVQEMHKAPPSCLDAGHLGLSRRVVKE). The helical transmembrane segment at 615–632 (MAMFLMICNIMCWILGAF) threads the bilayer. Over 633–651 (GAHPLYMNGLERQLYGSGI) the chain is Extracellular. A helical membrane pass occupies residues 652 to 674 (WLAILNIGLPLSVFYRMHSVGIL). Residues 675-681 (LEVYLHA) are Cytoplasmic-facing.

It belongs to the otopetrin family. In terms of assembly, homodimer.

It is found in the cell membrane. It catalyses the reaction H(+)(in) = H(+)(out). With respect to regulation, pH regulates the proton channel activity from both sides of the plasma membrane. Low pH activates the channel from the extracellular side but inactivates the channel on the intracellular side. Zn(2+) and Ca(2+) can partially block the channel. Proton-selective channel gated by extracellular protons. The chain is Proton channel OTOP3 (otop3) from Xenopus tropicalis (Western clawed frog).